Here is a 183-residue protein sequence, read N- to C-terminus: Putative manganese efflux pump MntP 1 (183 aa).

6 helical membrane-spanning segments follow: residues 6 to 26, 36 to 56, 64 to 84, 100 to 120, 130 to 150, and 158 to 178; these read LFLL…CIGI, IIFV…GGYI, IVPI…ILMI, IMYL…GFTT, LFMS…LGII, and ISII…LFGL.

The protein belongs to the MntP (TC 9.B.29) family.

Its subcellular location is the cell membrane. Probably functions as a manganese efflux pump. In Clostridium botulinum (strain Langeland / NCTC 10281 / Type F), this protein is Putative manganese efflux pump MntP 1.